Reading from the N-terminus, the 327-residue chain is Glycerol-3-phosphate dehydrogenase [NAD(P)+] (327 aa).

Positions 16, 36, and 108 each coordinate NADPH. Residues Lys108, Gly136, and Ser138 each coordinate sn-glycerol 3-phosphate. Ala140 provides a ligand contact to NADPH. Sn-glycerol 3-phosphate-binding residues include Lys191, Asp244, Ser254, Arg255, and Asn256. Lys191 functions as the Proton acceptor in the catalytic mechanism. Residue Arg255 coordinates NADPH. Leu274 and Glu276 together coordinate NADPH.

The protein belongs to the NAD-dependent glycerol-3-phosphate dehydrogenase family.

The protein localises to the cytoplasm. It carries out the reaction sn-glycerol 3-phosphate + NAD(+) = dihydroxyacetone phosphate + NADH + H(+). It catalyses the reaction sn-glycerol 3-phosphate + NADP(+) = dihydroxyacetone phosphate + NADPH + H(+). Its pathway is membrane lipid metabolism; glycerophospholipid metabolism. Its function is as follows. Catalyzes the reduction of the glycolytic intermediate dihydroxyacetone phosphate (DHAP) to sn-glycerol 3-phosphate (G3P), the key precursor for phospholipid synthesis. This Bradyrhizobium sp. (strain ORS 278) protein is Glycerol-3-phosphate dehydrogenase [NAD(P)+].